A 423-amino-acid polypeptide reads, in one-letter code: UDP-N-acetylglucosamine 1-carboxyvinyltransferase 2 (423 aa).

K23–N24 provides a ligand contact to phosphoenolpyruvate. R96 is a binding site for UDP-N-acetyl-alpha-D-glucosamine. C120 serves as the catalytic Proton donor. C120 carries the 2-(S-cysteinyl)pyruvic acid O-phosphothioketal modification. UDP-N-acetyl-alpha-D-glucosamine is bound by residues R125 to L129, D309, and V331.

The protein belongs to the EPSP synthase family. MurA subfamily.

The protein localises to the cytoplasm. The catalysed reaction is phosphoenolpyruvate + UDP-N-acetyl-alpha-D-glucosamine = UDP-N-acetyl-3-O-(1-carboxyvinyl)-alpha-D-glucosamine + phosphate. Its pathway is cell wall biogenesis; peptidoglycan biosynthesis. Cell wall formation. Adds enolpyruvyl to UDP-N-acetylglucosamine. This chain is UDP-N-acetylglucosamine 1-carboxyvinyltransferase 2, found in Streptococcus agalactiae serotype III (strain NEM316).